A 224-amino-acid chain; its full sequence is MLITGFPAGLLACNCYVLAERPGTDAVIVDPGQGAMGTLRRILDKNRLTPAAVLLTHGHIDHIWSAQKVSDTFGCPTYVHPADRFMLTDPIYGLGPRIAQLVAGAFFREPKQVVELDRDGDKIDLGGISVNIDHTPGHTRGSVVFRVLQATNNDKDIVFTGDTLFERAIGRTDLAGGSGRDLLRSIVDKLLVLDDSTVVLPGHGNSTTIGAERRFNPFLEGLSR.

Zn(2+) is bound by residues His57, His59, Asp61, His62, His138, Asp162, and His203.

The protein belongs to the metallo-beta-lactamase superfamily. Glyoxalase II family. It depends on Zn(2+) as a cofactor.

This is an uncharacterized protein from Mycobacterium tuberculosis (strain CDC 1551 / Oshkosh).